Here is a 515-residue protein sequence, read N- to C-terminus: Interferon-induced, double-stranded RNA-activated protein kinase (515 aa).

A2 is modified (N-acetylalanine). The 69-residue stretch at 8–76 (FYMDKLNKYR…AKLAVDILDN (69 aa)) folds into the DRBM 1 domain. K68 is covalently cross-linked (Glycyl lysine isopeptide (Lys-Gly) (interchain with G-Cter in ISG15)). T84 carries the phosphothreonine modification. The region spanning 95-162 (NYIGLVNSFA…AKEAYQKLLK (68 aa)) is the DRBM 2 domain. Y96 is modified (phosphotyrosine; by autocatalysis). K154 participates in a covalent cross-link: Glycyl lysine isopeptide (Lys-Gly) (interchain with G-Cter in ISG15). Residue Y157 is modified to Phosphotyrosine; by autocatalysis. Residues 204–224 (ENVFTNGLGENKRKSGVKVSP) are disordered. The residue at position 233 (T233) is a Phosphothreonine. Positions 241-515 (DFEDIEEIGL…ISEKKKRNTC (275 aa)) are interaction with TRAF5. One can recognise a Protein kinase domain in the interval 242–504 (FEDIEEIGLG…EILKTLAEWR (263 aa)). 248-256 (IGLGGFGQV) provides a ligand contact to ATP. Residue Y268 is modified to Phosphotyrosine; by autocatalysis. ATP is bound at residue K271. The Proton acceptor role is filled by D376. Phosphothreonine; by autocatalysis occurs at positions 409 and 414. S419 carries the post-translational modification Phosphoserine.

It belongs to the protein kinase superfamily. Ser/Thr protein kinase family. GCN2 subfamily. As to quaternary structure, homodimer. Interacts with DNAJC3 and STRBP. Forms a complex with FANCA, FANCC, FANCG and HSP70. Interacts with ADAR/ADAR1. The inactive form interacts with NCK1. Interacts (via the kinase catalytic domain) with STAT3 (via SH2 domain), TRAF2 (C-terminus), TRAF5 (C-terminus) and TRAF6 (C-terminus). Interacts with MAP2K6, TARBP2, NLRP1, NLRC4 and AIM2. Interacts (via DRBM 1 domain) with DUS2L (via DRBM domain). Interacts with DHX9 (via N-terminus) and this interaction is dependent upon activation of the kinase. The inactive form interacts with GSN. Interacts with IKBKB/IKKB, NPM1, NLRP3 and IRS1. In terms of processing, autophosphorylated on several Ser, Thr and Tyr residues. Autophosphorylation of Thr-414 is dependent on Thr-409 and is stimulated by dsRNA binding and dimerization. Autophosphorylation apparently leads to the activation of the kinase. Tyrosine autophosphorylation is essential for efficient dsRNA-binding, dimerization, and kinase activation. Expressed in heart, lung, brain, kidney, testes, thymus and bone marrow.

It is found in the cytoplasm. The protein localises to the nucleus. The protein resides in the perinuclear region. The catalysed reaction is L-seryl-[protein] + ATP = O-phospho-L-seryl-[protein] + ADP + H(+). The enzyme catalyses L-threonyl-[protein] + ATP = O-phospho-L-threonyl-[protein] + ADP + H(+). It catalyses the reaction L-tyrosyl-[protein] + ATP = O-phospho-L-tyrosyl-[protein] + ADP + H(+). Its activity is regulated as follows. Initially produced in an inactive form and is activated by binding to viral dsRNA, which causes dimerization and autophosphorylation in the activation loop and stimulation of function. ISGylation can activate it in the absence of viral infection. Can also be activated by heparin, pro-inflammatory stimuli, growth factors, cytokines, oxidative stress and the cellular protein PRKRA. Activity is markedly stimulated by manganese ions. Activation is blocked by the cellular proteins TARBP2, DUS2L, NPM1, NCK1 and ADAR. Its function is as follows. IFN-induced dsRNA-dependent serine/threonine-protein kinase that phosphorylates the alpha subunit of eukaryotic translation initiation factor 2 (EIF2S1/eIF-2-alpha) and plays a key role in the innate immune response to viral infection. Inhibits viral replication via the integrated stress response (ISR): EIF2S1/eIF-2-alpha phosphorylation in response to viral infection converts EIF2S1/eIF-2-alpha in a global protein synthesis inhibitor, resulting to a shutdown of cellular and viral protein synthesis, while concomitantly initiating the preferential translation of ISR-specific mRNAs, such as the transcriptional activator ATF4. Exerts its antiviral activity on a wide range of DNA and RNA viruses including west nile virus (WNV), sindbis virus (SV), foot-and-mouth virus (FMDV), semliki Forest virus (SFV) and lymphocytic choriomeningitis virus (LCMV). Also involved in the regulation of signal transduction, apoptosis, cell proliferation and differentiation: phosphorylates other substrates including p53/TP53, PPP2R5A, DHX9, ILF3, and IRS1. In addition to serine/threonine-protein kinase activity, also has tyrosine-protein kinase activity and phosphorylates CDK1 at 'Tyr-4' upon DNA damage, facilitating its ubiquitination and proteasomal degradation. Either as an adapter protein and/or via its kinase activity, can regulate various signaling pathways (p38 MAP kinase, NF-kappa-B and insulin signaling pathways) and transcription factors (JUN, STAT1, STAT3, IRF1, ATF3) involved in the expression of genes encoding pro-inflammatory cytokines and IFNs. Activates the NF-kappa-B pathway via interaction with IKBKB and TRAF family of proteins and activates the p38 MAP kinase pathway via interaction with MAP2K6. Can act as both a positive and negative regulator of the insulin signaling pathway (ISP). Negatively regulates ISP by inducing the inhibitory phosphorylation of insulin receptor substrate 1 (IRS1) at 'Ser-312' and positively regulates ISP via phosphorylation of PPP2R5A which activates FOXO1, which in turn up-regulates the expression of insulin receptor substrate 2 (IRS2). Can regulate NLRP3 inflammasome assembly and the activation of NLRP3, NLRP1, AIM2 and NLRC4 inflammasomes. Plays a role in the regulation of the cytoskeleton by binding to gelsolin (GSN), sequestering the protein in an inactive conformation away from actin. This chain is Interferon-induced, double-stranded RNA-activated protein kinase (Eif2ak2), found in Mus musculus (Mouse).